The chain runs to 207 residues: Small ribosomal subunit protein uS4 (207 aa).

Residues 31–56 (KCKLDSKPGQHGRTSGARTSDYGNQL) form a disordered region. A compositionally biased stretch (polar residues) spans 42–53 (GRTSGARTSDYG). The region spanning 97–157 (TRLDNVVYRM…EKSKKQVRIV (61 aa)) is the S4 RNA-binding domain.

The protein belongs to the universal ribosomal protein uS4 family. In terms of assembly, part of the 30S ribosomal subunit. Contacts protein S5. The interaction surface between S4 and S5 is involved in control of translational fidelity.

Its function is as follows. One of the primary rRNA binding proteins, it binds directly to 16S rRNA where it nucleates assembly of the body of the 30S subunit. In terms of biological role, with S5 and S12 plays an important role in translational accuracy. This Herminiimonas arsenicoxydans protein is Small ribosomal subunit protein uS4.